The primary structure comprises 237 residues: Ribonuclease PH (237 aa).

Phosphate-binding positions include arginine 86 and 124–126 (GTR).

The protein belongs to the RNase PH family. Homohexameric ring arranged as a trimer of dimers.

The catalysed reaction is tRNA(n+1) + phosphate = tRNA(n) + a ribonucleoside 5'-diphosphate. In terms of biological role, phosphorolytic 3'-5' exoribonuclease that plays an important role in tRNA 3'-end maturation. Removes nucleotide residues following the 3'-CCA terminus of tRNAs; can also add nucleotides to the ends of RNA molecules by using nucleoside diphosphates as substrates, but this may not be physiologically important. Probably plays a role in initiation of 16S rRNA degradation (leading to ribosome degradation) during starvation. The sequence is that of Ribonuclease PH from Shewanella denitrificans (strain OS217 / ATCC BAA-1090 / DSM 15013).